The sequence spans 199 residues: Recombination protein RecR (199 aa).

Residues 57–72 (CQQCRTFTEQNLCAIC) form a C4-type zinc finger. A Toprim domain is found at 81–176 (GMICVVEMPV…KVSRIAHGVP (96 aa)).

The protein belongs to the RecR family.

Functionally, may play a role in DNA repair. It seems to be involved in an RecBC-independent recombinational process of DNA repair. It may act with RecF and RecO. This Psychromonas ingrahamii (strain DSM 17664 / CCUG 51855 / 37) protein is Recombination protein RecR.